A 75-amino-acid chain; its full sequence is UPF0352 protein CKO_00587 (75 aa).

The protein belongs to the UPF0352 family.

The protein is UPF0352 protein CKO_00587 of Citrobacter koseri (strain ATCC BAA-895 / CDC 4225-83 / SGSC4696).